A 273-amino-acid polypeptide reads, in one-letter code: Dermonecrotic toxin LdSicTox-alphaIB3av (273 aa).

Histidine 5 is an active-site residue. Mg(2+) contacts are provided by glutamate 25 and aspartate 27. The active-site Nucleophile is histidine 41. Disulfide bonds link cysteine 45–cysteine 51 and cysteine 47–cysteine 190. Position 85 (aspartate 85) interacts with Mg(2+).

This sequence belongs to the arthropod phospholipase D family. Class II subfamily. The cofactor is Mg(2+). Expressed by the venom gland.

The protein resides in the secreted. It carries out the reaction an N-(acyl)-sphingosylphosphocholine = an N-(acyl)-sphingosyl-1,3-cyclic phosphate + choline. It catalyses the reaction an N-(acyl)-sphingosylphosphoethanolamine = an N-(acyl)-sphingosyl-1,3-cyclic phosphate + ethanolamine. The catalysed reaction is a 1-acyl-sn-glycero-3-phosphocholine = a 1-acyl-sn-glycero-2,3-cyclic phosphate + choline. The enzyme catalyses a 1-acyl-sn-glycero-3-phosphoethanolamine = a 1-acyl-sn-glycero-2,3-cyclic phosphate + ethanolamine. Functionally, dermonecrotic toxins cleave the phosphodiester linkage between the phosphate and headgroup of certain phospholipids (sphingolipid and lysolipid substrates), forming an alcohol (often choline) and a cyclic phosphate. This toxin acts on sphingomyelin (SM). It may also act on ceramide phosphoethanolamine (CPE), lysophosphatidylcholine (LPC) and lysophosphatidylethanolamine (LPE), but not on lysophosphatidylserine (LPS), and lysophosphatidylglycerol (LPG). It acts by transphosphatidylation, releasing exclusively cyclic phosphate products as second products. Induces dermonecrosis, hemolysis, increased vascular permeability, edema, inflammatory response, and platelet aggregation. The chain is Dermonecrotic toxin LdSicTox-alphaIB3av from Loxosceles deserta (Desert recluse spider).